Here is a 455-residue protein sequence, read N- to C-terminus: ATP-dependent protease ATPase subunit HslU (455 aa).

ATP is bound by residues Ile-19 and 61–66; that span reads GVGKTE. Residues 144–163 form a disordered region; sequence ESKVGFANEPAEDAASKKEK. Residues Asp-268, Glu-333, and Arg-405 each contribute to the ATP site.

It belongs to the ClpX chaperone family. HslU subfamily. A double ring-shaped homohexamer of HslV is capped on each side by a ring-shaped HslU homohexamer. The assembly of the HslU/HslV complex is dependent on binding of ATP.

It localises to the cytoplasm. Its function is as follows. ATPase subunit of a proteasome-like degradation complex; this subunit has chaperone activity. The binding of ATP and its subsequent hydrolysis by HslU are essential for unfolding of protein substrates subsequently hydrolyzed by HslV. HslU recognizes the N-terminal part of its protein substrates and unfolds these before they are guided to HslV for hydrolysis. The sequence is that of ATP-dependent protease ATPase subunit HslU from Francisella tularensis subsp. holarctica (strain FTNF002-00 / FTA).